We begin with the raw amino-acid sequence, 133 residues long: Small ribosomal subunit protein uS9 (133 aa).

Positions 98-113 (RKPLKTEGHLSRDPRA) are enriched in basic and acidic residues. Positions 98–133 (RKPLKTEGHLSRDPRAKERRKYGLKKARKAPQFSKR) are disordered. A compositionally biased stretch (basic residues) spans 114-133 (KERRKYGLKKARKAPQFSKR).

Belongs to the universal ribosomal protein uS9 family.

The sequence is that of Small ribosomal subunit protein uS9 from Synechococcus sp. (strain CC9902).